A 462-amino-acid chain; its full sequence is Squalene synthase LSS (462 aa).

NADP(+)-binding residues include arginine 48 and arginine 73. 3 residues coordinate Mg(2+): aspartate 76, glutamate 79, and aspartate 80. Arginine 214, lysine 314, and arginine 316 together coordinate NADP(+). 2 helical membrane-spanning segments follow: residues leucine 399 to tryptophan 419 and leucine 436 to phenylalanine 456.

Belongs to the phytoene/squalene synthase family. Requires Mg(2+) as cofactor.

The protein localises to the membrane. It catalyses the reaction 2 (2E,6E)-farnesyl diphosphate + NADH + H(+) = squalene + 2 diphosphate + NAD(+). The catalysed reaction is 2 (2E,6E)-farnesyl diphosphate + NADPH + H(+) = squalene + 2 diphosphate + NADP(+). Functionally, converts farnesyl diphosphate (FPP) into squalene, a precursor for sterol biosynthesis in eukaryotes. The polypeptide is Squalene synthase LSS (Botryococcus braunii (Green alga)).